A 147-amino-acid polypeptide reads, in one-letter code: 6,7-dimethyl-8-ribityllumazine synthase (147 aa).

Residues Phe-16, 48–50 (TFD), and 73–75 (AVI) each bind 5-amino-6-(D-ribitylamino)uracil. (2S)-2-hydroxy-3-oxobutyl phosphate is bound at residue 78-79 (DT). His-81 functions as the Proton donor in the catalytic mechanism. Leu-106 contacts 5-amino-6-(D-ribitylamino)uracil. Arg-121 contributes to the (2S)-2-hydroxy-3-oxobutyl phosphate binding site.

The protein belongs to the DMRL synthase family.

The enzyme catalyses (2S)-2-hydroxy-3-oxobutyl phosphate + 5-amino-6-(D-ribitylamino)uracil = 6,7-dimethyl-8-(1-D-ribityl)lumazine + phosphate + 2 H2O + H(+). It participates in cofactor biosynthesis; riboflavin biosynthesis; riboflavin from 2-hydroxy-3-oxobutyl phosphate and 5-amino-6-(D-ribitylamino)uracil: step 1/2. In terms of biological role, catalyzes the formation of 6,7-dimethyl-8-ribityllumazine by condensation of 5-amino-6-(D-ribitylamino)uracil with 3,4-dihydroxy-2-butanone 4-phosphate. This is the penultimate step in the biosynthesis of riboflavin. This Aeropyrum pernix (strain ATCC 700893 / DSM 11879 / JCM 9820 / NBRC 100138 / K1) protein is 6,7-dimethyl-8-ribityllumazine synthase.